A 430-amino-acid chain; its full sequence is Replication factor C large subunit (430 aa).

75–82 (GPPGTGKT) contributes to the ATP binding site.

It belongs to the activator 1 small subunits family. RfcL subfamily. As to quaternary structure, heteromultimer composed of small subunits (RfcS) and large subunits (RfcL).

Part of the RFC clamp loader complex which loads the PCNA sliding clamp onto DNA. The polypeptide is Replication factor C large subunit (Nanoarchaeum equitans (strain Kin4-M)).